The following is a 180-amino-acid chain: uncharacterized protein (180 aa).

Coiled coils occupy residues 3-82 and 95-179; these read LKSL…QKIA and REYE…EKYG.

This is an uncharacterized protein from Aquifex aeolicus (strain VF5).